The sequence spans 272 residues: Small ribosomal subunit protein uS2 (272 aa).

Residues 224-233 (EGKKAREERQ) are compositionally biased toward basic and acidic residues. The segment at 224–272 (EGKKAREERQLAAAKDAAGDAKPEAEEAPAAAEAEEAPAAEAEEAPAAE) is disordered. Over residues 256–272 (EAEEAPAAEAEEAPAAE) the composition is skewed to acidic residues.

Belongs to the universal ribosomal protein uS2 family.

This is Small ribosomal subunit protein uS2 from Corynebacterium glutamicum (strain ATCC 13032 / DSM 20300 / JCM 1318 / BCRC 11384 / CCUG 27702 / LMG 3730 / NBRC 12168 / NCIMB 10025 / NRRL B-2784 / 534).